A 274-amino-acid polypeptide reads, in one-letter code: Dermonecrotic toxin SdSicTox-betaIIB1bii (274 aa).

The active site involves His-5. Positions 25 and 27 each coordinate Mg(2+). The active-site Nucleophile is His-41. Disulfide bonds link Cys-45–Cys-51 and Cys-47–Cys-190. Asp-85 contacts Mg(2+).

The protein belongs to the arthropod phospholipase D family. Class II subfamily. Requires Mg(2+) as cofactor. As to expression, expressed by the venom gland.

The protein resides in the secreted. It carries out the reaction an N-(acyl)-sphingosylphosphocholine = an N-(acyl)-sphingosyl-1,3-cyclic phosphate + choline. It catalyses the reaction an N-(acyl)-sphingosylphosphoethanolamine = an N-(acyl)-sphingosyl-1,3-cyclic phosphate + ethanolamine. The catalysed reaction is a 1-acyl-sn-glycero-3-phosphocholine = a 1-acyl-sn-glycero-2,3-cyclic phosphate + choline. The enzyme catalyses a 1-acyl-sn-glycero-3-phosphoethanolamine = a 1-acyl-sn-glycero-2,3-cyclic phosphate + ethanolamine. Dermonecrotic toxins cleave the phosphodiester linkage between the phosphate and headgroup of certain phospholipids (sphingolipid and lysolipid substrates), forming an alcohol (often choline) and a cyclic phosphate. This toxin acts on sphingomyelin (SM). It may also act on ceramide phosphoethanolamine (CPE), lysophosphatidylcholine (LPC) and lysophosphatidylethanolamine (LPE), but not on lysophosphatidylserine (LPS), and lysophosphatidylglycerol (LPG). It acts by transphosphatidylation, releasing exclusively cyclic phosphate products as second products. Induces dermonecrosis, hemolysis, increased vascular permeability, edema, inflammatory response, and platelet aggregation. The protein is Dermonecrotic toxin SdSicTox-betaIIB1bii of Sicarius cf. damarensis (strain GJB-2008) (Six-eyed sand spider).